Reading from the N-terminus, the 194-residue chain is MTAVQLIVGLGNPGPEYEQTRHNAGALFVERVASAKGVRLSADKKYFGLVGKFSHQGRDVRLLIPTTYMNRSGQSVAALANFFRIPPAAILVAHDELDMPPGTARLKQGGGHGGHNGLRDIIAQFGNQNSFYRLRLGIGHPGDKNLVSGFVLGRAPRSEQEKLEACIDFALDVLPDMLDGNWTRAMQQLHSRKA.

Y17 serves as a coordination point for tRNA. The Proton acceptor role is filled by H22. Residues Y68, N70, and N116 each coordinate tRNA.

Belongs to the PTH family. Monomer.

Its subcellular location is the cytoplasm. It catalyses the reaction an N-acyl-L-alpha-aminoacyl-tRNA + H2O = an N-acyl-L-amino acid + a tRNA + H(+). Hydrolyzes ribosome-free peptidyl-tRNAs (with 1 or more amino acids incorporated), which drop off the ribosome during protein synthesis, or as a result of ribosome stalling. Its function is as follows. Catalyzes the release of premature peptidyl moieties from peptidyl-tRNA molecules trapped in stalled 50S ribosomal subunits, and thus maintains levels of free tRNAs and 50S ribosomes. The chain is Peptidyl-tRNA hydrolase from Azotobacter vinelandii (strain DJ / ATCC BAA-1303).